A 433-amino-acid chain; its full sequence is Serine hydroxymethyltransferase (433 aa).

121 to 123 (AHV) is a binding site for (6S)-5,6,7,8-tetrahydrofolate. Lys-227 is modified (N6-(pyridoxal phosphate)lysine). Glu-243 contacts (6S)-5,6,7,8-tetrahydrofolate.

It belongs to the SHMT family. As to quaternary structure, homodimer. Pyridoxal 5'-phosphate serves as cofactor.

Its subcellular location is the cytoplasm. The protein operates within amino-acid biosynthesis; glycine biosynthesis; glycine from L-serine: step 1/1. Its function is as follows. Catalyzes the reversible interconversion of serine and glycine with a modified folate serving as the one-carbon carrier. Also exhibits a pteridine-independent aldolase activity toward beta-hydroxyamino acids, producing glycine and aldehydes, via a retro-aldol mechanism. The polypeptide is Serine hydroxymethyltransferase (Saccharolobus islandicus (strain M.14.25 / Kamchatka #1) (Sulfolobus islandicus)).